The sequence spans 1110 residues: Coiled-coil domain-containing protein 150 (1110 aa).

4 coiled-coil regions span residues 122–250, 288–313, 413–695, and 728–1048; these read LENL…TSAS, QDLLAQEQRKNEDLGMTISQLKSDLN, AAHA…KEDN, and SEIA…EAHR.

The chain is Coiled-coil domain-containing protein 150 (Ccdc150) from Mus musculus (Mouse).